Reading from the N-terminus, the 550-residue chain is Chaperonin GroEL 1 (550 aa).

Residues 30 to 33, K51, 87 to 91, G415, and D496 contribute to the ATP site; these read TLGP and DGTTT.

It belongs to the chaperonin (HSP60) family. As to quaternary structure, forms a cylinder of 14 subunits composed of two heptameric rings stacked back-to-back. Interacts with the co-chaperonin GroES.

The protein resides in the cytoplasm. The catalysed reaction is ATP + H2O + a folded polypeptide = ADP + phosphate + an unfolded polypeptide.. Its function is as follows. Together with its co-chaperonin GroES, plays an essential role in assisting protein folding. The GroEL-GroES system forms a nano-cage that allows encapsulation of the non-native substrate proteins and provides a physical environment optimized to promote and accelerate protein folding. The polypeptide is Chaperonin GroEL 1 (Rhodopseudomonas palustris (strain HaA2)).